The sequence spans 428 residues: RF4 protein (428 aa).

N-linked (GlcNAc...) asparagine glycans are attached at residues N8, N205, and N344.

Its function is as follows. Not known. The protein is RF4 protein (RF4) of Kluyveromyces lactis (strain ATCC 8585 / CBS 2359 / DSM 70799 / NBRC 1267 / NRRL Y-1140 / WM37) (Yeast).